The sequence spans 205 residues: E3 ubiquitin-protein ligase complex slx8-rfp subunit rfp2 (205 aa).

Residues 147–190 (CAKCGNELVSDEKKSIFAAKCGHLFCSTCAKELRKKTVPCPVQH) form an RING-type; degenerate zinc finger.

As to quaternary structure, part of an E3 ubiquitin complex including rfp1, rfp2 and slx8. Interacts with slx8.

It is found in the nucleus. It catalyses the reaction S-ubiquitinyl-[E2 ubiquitin-conjugating enzyme]-L-cysteine + [acceptor protein]-L-lysine = [E2 ubiquitin-conjugating enzyme]-L-cysteine + N(6)-ubiquitinyl-[acceptor protein]-L-lysine.. It participates in protein modification; protein ubiquitination. Functionally, mediates ubiquitination and subsequent desumoylation/degradation of sumoylated proteins and proteins containing SUMO-like domains. Involved in maintaining genome stability where it acts in the cellular response to DNA damage. This Schizosaccharomyces pombe (strain 972 / ATCC 24843) (Fission yeast) protein is E3 ubiquitin-protein ligase complex slx8-rfp subunit rfp2 (rfp2).